The chain runs to 144 residues: Ferredoxin-thioredoxin reductase catalytic chain, chloroplastic (144 aa).

The N-terminal 31 residues, 1-31 (MKALQASIAYSFPISSPAASPRRFSRVIRAQ), are a transit peptide targeting the chloroplast. Residue cysteine 83 coordinates [4Fe-4S] cluster. The Nucleophile role is filled by cysteine 85. An intrachain disulfide couples cysteine 85 to cysteine 115. Cysteine 102, cysteine 104, and cysteine 113 together coordinate [4Fe-4S] cluster.

Belongs to the ferredoxin thioredoxin reductase beta subunit family. As to quaternary structure, heterodimer of subunit A (variable subunit) and subunit B (catalytic subunit). Heterodimeric FTR forms a complex with ferredoxin and thioredoxin. Requires [4Fe-4S] cluster as cofactor.

It is found in the plastid. The protein resides in the chloroplast. It catalyses the reaction [thioredoxin]-disulfide + 2 reduced [2Fe-2S]-[ferredoxin] + 2 H(+) = [thioredoxin]-dithiol + 2 oxidized [2Fe-2S]-[ferredoxin]. Catalytic subunit of the ferredoxin-thioredoxin reductase (FTR), which catalyzes the two-electron reduction of thioredoxins by the electrons provided by reduced ferredoxin. The chain is Ferredoxin-thioredoxin reductase catalytic chain, chloroplastic (FTRC) from Spinacia oleracea (Spinach).